The following is a 165-amino-acid chain: IQSTSMDQGSLSEDSMNSFIRTLIQAGIWKNKVPRQMTRTQDGIQTIVKKTEDEPDATASKDISLGFQPIVSMDAELLRQQRRFSSPRVLLSENTPLEPPPLYLMEEPMVLNRTSRRKRFAEGKSHRGEYSVCDSESRWVTDKSSAVDIRGHQVTVLGEIRMGPS.

An N-terminal signal peptide occupies residues 1 to 3 (IQS). A propeptide spanning residues 4–119 (TSMDQGSLSE…VLNRTSRRKR (116 aa)) is cleaved from the precursor. Asparagine 112 carries an N-linked (GlcNAc...) asparagine glycan.

This sequence belongs to the NGF-beta family.

The protein resides in the secreted. Its function is as follows. Seems to promote the survival of visceral and proprioceptive sensory neurons. The chain is Neurotrophin-3 (NTF3) from Anilius scytale (Coral cylinder snake).